Reading from the N-terminus, the 149-residue chain is Large ribosomal subunit protein bL9 (149 aa).

This sequence belongs to the bacterial ribosomal protein bL9 family.

Its function is as follows. Binds to the 23S rRNA. The protein is Large ribosomal subunit protein bL9 of Legionella pneumophila (strain Paris).